Here is a 208-residue protein sequence, read N- to C-terminus: MKVVEVKHPLIRHKVGLMREADISTKRFRELATEVGSLLTYEATSDFETEKVTIEGWNGPVEIDQIKGKKVTVVPILRAGLGMMDGVLEHIPSARISVVGIYRDEETLEPVPYFEKIVSNVEERIALVVDPMLATGGSMIATIDLLKSKGCTSIKALVLVAAPEGIAALEKAHPDIELYTASIDKCLNEQGYILPGLGDAGDKIFGTK.

Residues Arg-78, Arg-103, and 130–138 (DPMLATGGS) each bind 5-phospho-alpha-D-ribose 1-diphosphate. Residues Ile-193 and 198–200 (GDA) contribute to the uracil site. Asp-199 contacts 5-phospho-alpha-D-ribose 1-diphosphate.

It belongs to the UPRTase family. The cofactor is Mg(2+).

The enzyme catalyses UMP + diphosphate = 5-phospho-alpha-D-ribose 1-diphosphate + uracil. Its pathway is pyrimidine metabolism; UMP biosynthesis via salvage pathway; UMP from uracil: step 1/1. Its activity is regulated as follows. Allosterically activated by GTP. In terms of biological role, catalyzes the conversion of uracil and 5-phospho-alpha-D-ribose 1-diphosphate (PRPP) to UMP and diphosphate. The chain is Uracil phosphoribosyltransferase from Shewanella denitrificans (strain OS217 / ATCC BAA-1090 / DSM 15013).